The following is a 189-amino-acid chain: uncharacterized protein (189 aa).

Helical transmembrane passes span 20–40, 46–66, 100–120, and 126–146; these read FILG…YLTF, TIII…IILI, VLLF…SLNI, and FVLY…GDVI.

To M.jannaschii MJ0795.1 and MJ1249.1.

It localises to the cell membrane. This is an uncharacterized protein from Methanocaldococcus jannaschii (strain ATCC 43067 / DSM 2661 / JAL-1 / JCM 10045 / NBRC 100440) (Methanococcus jannaschii).